The chain runs to 274 residues: NH(3)-dependent NAD(+) synthetase (274 aa).

46-53 (GISGGQDS) is an ATP binding site. Residue Asp-52 coordinates Mg(2+). Arg-140 is a deamido-NAD(+) binding site. Thr-160 serves as a coordination point for ATP. Glu-165 lines the Mg(2+) pocket. Residues Lys-173 and Asp-180 each contribute to the deamido-NAD(+) site. Residues Lys-189 and Thr-211 each contribute to the ATP site. 260-261 (HK) contributes to the deamido-NAD(+) binding site.

The protein belongs to the NAD synthetase family. As to quaternary structure, homodimer.

It catalyses the reaction deamido-NAD(+) + NH4(+) + ATP = AMP + diphosphate + NAD(+) + H(+). Its pathway is cofactor biosynthesis; NAD(+) biosynthesis; NAD(+) from deamido-NAD(+) (ammonia route): step 1/1. Its function is as follows. Catalyzes the ATP-dependent amidation of deamido-NAD to form NAD. Uses ammonia as a nitrogen source. The sequence is that of NH(3)-dependent NAD(+) synthetase from Streptococcus suis (strain 05ZYH33).